We begin with the raw amino-acid sequence, 475 residues long: Glutamyl-tRNA(Gln) amidotransferase subunit A (475 aa).

Residues Lys-69 and Ser-144 each act as charge relay system in the active site. Residue Ser-168 is the Acyl-ester intermediate of the active site.

It belongs to the amidase family. GatA subfamily. In terms of assembly, heterotrimer of A, B and C subunits.

It catalyses the reaction L-glutamyl-tRNA(Gln) + L-glutamine + ATP + H2O = L-glutaminyl-tRNA(Gln) + L-glutamate + ADP + phosphate + H(+). Functionally, allows the formation of correctly charged Gln-tRNA(Gln) through the transamidation of misacylated Glu-tRNA(Gln) in organisms which lack glutaminyl-tRNA synthetase. The reaction takes place in the presence of glutamine and ATP through an activated gamma-phospho-Glu-tRNA(Gln). This Methanosarcina barkeri (strain Fusaro / DSM 804) protein is Glutamyl-tRNA(Gln) amidotransferase subunit A.